Here is a 200-residue protein sequence, read N- to C-terminus: Lipopolysaccharide core heptose(II)-phosphate phosphatase (200 aa).

The N-terminal stretch at 1-25 (MLAFCRSSLKSKKYFIILLALAAIA) is a signal peptide.

This sequence belongs to the phosphoglycerate mutase family. Ais subfamily.

It localises to the periplasm. It functions in the pathway bacterial outer membrane biogenesis; lipopolysaccharide metabolism. In terms of biological role, catalyzes the dephosphorylation of heptose(II) of the outer membrane lipopolysaccharide core. This Escherichia coli O6:H1 (strain CFT073 / ATCC 700928 / UPEC) protein is Lipopolysaccharide core heptose(II)-phosphate phosphatase.